We begin with the raw amino-acid sequence, 398 residues long: 1-deoxy-D-xylulose 5-phosphate reductoisomerase (398 aa).

NADPH is bound by residues threonine 10, glycine 11, serine 12, isoleucine 13, asparagine 38, and asparagine 124. Lysine 125 is a binding site for 1-deoxy-D-xylulose 5-phosphate. An NADPH-binding site is contributed by glutamate 126. Aspartate 150 is a binding site for Mn(2+). Positions 151, 152, 176, and 199 each coordinate 1-deoxy-D-xylulose 5-phosphate. A Mn(2+)-binding site is contributed by glutamate 152. Glycine 205 lines the NADPH pocket. The 1-deoxy-D-xylulose 5-phosphate site is built by serine 212, asparagine 217, lysine 218, and glutamate 221. Glutamate 221 contacts Mn(2+).

This sequence belongs to the DXR family. Requires Mg(2+) as cofactor. The cofactor is Mn(2+).

The enzyme catalyses 2-C-methyl-D-erythritol 4-phosphate + NADP(+) = 1-deoxy-D-xylulose 5-phosphate + NADPH + H(+). Its pathway is isoprenoid biosynthesis; isopentenyl diphosphate biosynthesis via DXP pathway; isopentenyl diphosphate from 1-deoxy-D-xylulose 5-phosphate: step 1/6. Functionally, catalyzes the NADPH-dependent rearrangement and reduction of 1-deoxy-D-xylulose-5-phosphate (DXP) to 2-C-methyl-D-erythritol 4-phosphate (MEP). The protein is 1-deoxy-D-xylulose 5-phosphate reductoisomerase of Rippkaea orientalis (strain PCC 8801 / RF-1) (Cyanothece sp. (strain PCC 8801)).